Reading from the N-terminus, the 450-residue chain is Glucose-6-phosphate isomerase (450 aa).

Residue Glu-291 is the Proton donor of the active site. Catalysis depends on residues His-312 and Lys-426.

Belongs to the GPI family.

The protein localises to the cytoplasm. It carries out the reaction alpha-D-glucose 6-phosphate = beta-D-fructose 6-phosphate. Its pathway is carbohydrate biosynthesis; gluconeogenesis. It participates in carbohydrate degradation; glycolysis; D-glyceraldehyde 3-phosphate and glycerone phosphate from D-glucose: step 2/4. Its function is as follows. Catalyzes the reversible isomerization of glucose-6-phosphate to fructose-6-phosphate. In Clostridium botulinum (strain Hall / ATCC 3502 / NCTC 13319 / Type A), this protein is Glucose-6-phosphate isomerase.